Consider the following 197-residue polypeptide: FMN-dependent NADH:quinone oxidoreductase (197 aa).

S10 is a binding site for FMN.

This sequence belongs to the azoreductase type 1 family. As to quaternary structure, homodimer. Requires FMN as cofactor.

It carries out the reaction 2 a quinone + NADH + H(+) = 2 a 1,4-benzosemiquinone + NAD(+). The catalysed reaction is N,N-dimethyl-1,4-phenylenediamine + anthranilate + 2 NAD(+) = 2-(4-dimethylaminophenyl)diazenylbenzoate + 2 NADH + 2 H(+). Quinone reductase that provides resistance to thiol-specific stress caused by electrophilic quinones. Functionally, also exhibits azoreductase activity. Catalyzes the reductive cleavage of the azo bond in aromatic azo compounds to the corresponding amines. The protein is FMN-dependent NADH:quinone oxidoreductase of Mycoplasma genitalium (strain ATCC 33530 / DSM 19775 / NCTC 10195 / G37) (Mycoplasmoides genitalium).